The primary structure comprises 227 residues: Translation initiation factor 6 (227 aa).

This sequence belongs to the eIF-6 family.

In terms of biological role, binds to the 50S ribosomal subunit and prevents its association with the 30S ribosomal subunit to form the 70S initiation complex. In Methanococcus maripaludis (strain C5 / ATCC BAA-1333), this protein is Translation initiation factor 6.